A 69-amino-acid chain; its full sequence is Putative membrane protein insertion efficiency factor (69 aa).

Belongs to the UPF0161 family.

The protein resides in the cell inner membrane. Functionally, could be involved in insertion of integral membrane proteins into the membrane. The chain is Putative membrane protein insertion efficiency factor from Aromatoleum aromaticum (strain DSM 19018 / LMG 30748 / EbN1) (Azoarcus sp. (strain EbN1)).